The following is a 94-amino-acid chain: Co-chaperonin GroES (94 aa).

This sequence belongs to the GroES chaperonin family. Heptamer of 7 subunits arranged in a ring. Interacts with the chaperonin GroEL.

The protein localises to the cytoplasm. In terms of biological role, together with the chaperonin GroEL, plays an essential role in assisting protein folding. The GroEL-GroES system forms a nano-cage that allows encapsulation of the non-native substrate proteins and provides a physical environment optimized to promote and accelerate protein folding. GroES binds to the apical surface of the GroEL ring, thereby capping the opening of the GroEL channel. The protein is Co-chaperonin GroES of Streptococcus equinus (Streptococcus bovis).